The following is a 323-amino-acid chain: Calcium homeostasis modulator protein 2 (323 aa).

Residues 1-21 lie on the Cytoplasmic side of the membrane; it reads MAALIAENFRFLSLFFKSKDV. The tract at residues 14–39 is central pore; that stretch reads LFFKSKDVMIFNGLVALGTVGSQELF. Residues 22-43 form a helical membrane-spanning segment; it reads MIFNGLVALGTVGSQELFTVVA. Over 44-52 the chain is Extracellular; it reads FHCPCSPAR. 2 cysteine pairs are disulfide-bonded: Cys-46–Cys-130 and Cys-48–Cys-162. The chain crosses the membrane as a helical span at residues 53–76; that stretch reads NYLYGLAAIGVPALALFLIGVILN. Residues 77-101 lie on the Cytoplasmic side of the membrane; sequence NHTWNLVAECQYRRTKNCSAAPNFL. Residues 102-132 traverse the membrane as a helical segment; sequence LLSSIVGRAAVAPVTWSVISLLRGEAYVCAL. Over 133-179 the chain is Extracellular; the sequence is SEFVNPHSLMVGERSFPVAHATEILARFPCGEGPANLSVFREEVSRR. Residues 145–152 form a hemichannel docking region; the sequence is ERSFPVAH. A helical membrane pass occupies residues 180–206; sequence LKYESQLFGWLLIGVVAILVFLTKCLK. The Cytoplasmic portion of the chain corresponds to 207-323; that stretch reads HYCSPLSYRQ…DHVEMSLLPS (117 aa). Positions 214 to 251 are intersubunit interaction; the sequence is YRQEAYWAQYRANEDQLFQRTAEVHSRVLAANNVRRFF.

The protein belongs to the CALHM family. As to quaternary structure, homo-undecamer. Two undecameric hemichannels can assemble in a head-to-head manner to form a gap junction.

Its subcellular location is the cell membrane. It carries out the reaction ATP(in) = ATP(out). In terms of biological role, pore-forming subunit of Ca(2+) homeostasis modulator channels. Mediates ATP release from astrocytes and ATP-induced Ca(2+) influx in microglia thus regulating neuronal ATP and Ca(2+) homeostasis, synaptic transmission and neuroinflammatory response. May form intercellular gap junctions. The gating mechanism remains unknown. This chain is Calcium homeostasis modulator protein 2 (CALHM2), found in Bos taurus (Bovine).